We begin with the raw amino-acid sequence, 316 residues long: Retinol dehydrogenase 7 (316 aa).

33 to 57 (FITGCDSGFGNLLARQLDRRGMRVL) contributes to the NADP(+) binding site. Substrate is bound at residue Ser163. The active-site Proton acceptor is Tyr175.

This sequence belongs to the short-chain dehydrogenases/reductases (SDR) family. Highly expressed in liver. Also expressed in lung, eye, kidney, and brain.

The protein resides in the microsome. The protein localises to the endoplasmic reticulum. It carries out the reaction all-trans-retinol--[retinol-binding protein] + NAD(+) = all-trans-retinal--[retinol-binding protein] + NADH + H(+). The protein operates within cofactor metabolism; retinol metabolism. Acts on androgens and retinols, i.e. has steroid 3-alpha- and 17-beta-dehydrogenase and cis/trans-retinol catalytic activities. This Mus musculus (Mouse) protein is Retinol dehydrogenase 7 (Rdh7).